The chain runs to 980 residues: MSLEGNTLGKGAKSFPLYIAVNQYSKRMEDELNMKPGDKIKVITDDGEYNDGWYYGRNLRTKEEGLYPAVFTKRIAIEKPENLHKSPTQESGNSGVKYGNLNDSASNIGKVSSHQQENRYTSLKSTMSDIDKALEELRSGSVEQEVSKSPTRVPEVSTPQLQDEQTLIQEKTRNEENTTHDSLFSSTADLNLSSESLKNISKSNISTKSLEPSSESVRQLDLKMAKSWSPEEVTDYFSLVGFDQSTCNKFKEHQVSGKILLELELEHLKELEINSFGIRFQIFKEIRNIKSAIDSSSNKLDADYSTFAFENQAAQLMPAATVNRDEIQQQISSKCNKLSSESSDRKSSSVTTELQRPSSVVVNPNFKLHDPAEQILDMTEVPNLFADKDIFESPGRAPKPPSYPSPVQPPQSPSFNNRYTNNNARFPPQTTYPPKNKNPTVYSNGLIPNSSTSSDNSTGKFKFPAMNGHDSNSRKTTLTSATIPSINTVNTDESLPAISNISSNATSHHPNRNSVVYNNHKRTESGSSFVDLFNRISMLSPVKSSFDEEETKQPSKASRAVFDSARRKSSYGHSRDASLSEMKKHRRNSSILSFFSSKSQSNPTSPTKQTFTIDPAKMTSHSRSQSNSYSHARSQSYSHSRKHSLVTSPLKTSLSPINSKSNIALAHSETPTSSNNKEAVSQPSEGKHKHKHKHKSKHKHKNSSSKDGSSEEKSKKKLFSSTKESFVGSKEFKRSPSELTQKSTKSILPRSNAKKQQTSAFTEGIRSITAKESMQTADCSGWMSKKGTGAMGTWKQRFFTLHGTRLSYFTNTNDEKERGLIDITAHRVLPASDDDRLISLYAASLGKGKYCFKLVPPQPGSKKGLTFTEPRVHYFAVENKSEMKAWLSAIIKATIDIDTSVPVISSYATPTIPLSKAQTLLEEARLQTQLRDAEEEEGRDQFGWDDTQNKRNSNYPIEQDQFETSDYLESSAFEYPGGRL.

The 65-residue stretch at 13 to 77 (KSFPLYIAVN…PAVFTKRIAI (65 aa)) folds into the SH3 domain. S104, S106, and S128 each carry phosphoserine. The disordered stretch occupies residues 139–163 (SGSVEQEVSKSPTRVPEVSTPQLQD). The segment covering 141 to 150 (SVEQEVSKSP) has biased composition (polar residues). Residues T151 and T158 each carry the phosphothreonine modification. The residue at position 209 (S209) is a Phosphoserine. The region spanning 228-292 (WSPEEVTDYF…FKEIRNIKSA (65 aa)) is the SAM domain. Disordered stretches follow at residues 333–356 (SKCNKLSSESSDRKSSSVTTELQR) and 390–438 (IFES…KNKN). Residues S393 and S412 each carry the phosphoserine modification. Pro residues predominate over residues 397–412 (APKPPSYPSPVQPPQS). Polar residues predominate over residues 415–438 (FNNRYTNNNARFPPQTTYPPKNKN). S525 and S528 each carry phosphoserine. The segment at 544-762 (SSFDEEETKQ…AKKQQTSAFT (219 aa)) is disordered. The span at 573 to 582 (HSRDASLSEM) shows a compositional bias: basic and acidic residues. 3 positions are modified to phosphoserine: S589, S590, and S593. 2 stretches are compositionally biased toward low complexity: residues 589-608 (SSILSFFSSKSQSNPTSPTK) and 621-638 (HSRSQSNSYSHARSQSYS). Phosphoserine is present on residues S644 and S655. 2 stretches are compositionally biased toward polar residues: residues 645-662 (LVTSPLKTSLSPINSKSN) and 669-683 (ETPTSSNNKEAVSQP). Residues 687-703 (KHKHKHKHKSKHKHKNS) are compositionally biased toward basic residues. S735 carries the post-translational modification Phosphoserine. The span at 737 to 746 (SELTQKSTKS) shows a compositional bias: polar residues. The PH domain maps to 776 to 895 (TADCSGWMSK…WLSAIIKATI (120 aa)). T919 is modified (phosphothreonine). The disordered stretch occupies residues 930 to 980 (LRDAEEEEGRDQFGWDDTQNKRNSNYPIEQDQFETSDYLESSAFEYPGGRL). Residues 950 to 968 (KRNSNYPIEQDQFETSDYL) show a composition bias toward polar residues.

As to quaternary structure, interacts with BEM1.

The protein resides in the bud. Its subcellular location is the bud neck. In terms of biological role, functions redundantly with BOI2 to promote the fusion of secretory vesicles with the plasma membrane at sites of polarized growth. The protein is BEM1-interacting protein 1 of Saccharomyces cerevisiae (strain ATCC 204508 / S288c) (Baker's yeast).